The chain runs to 367 residues: DNA replication and repair protein RecF (367 aa).

Gly30–Thr37 lines the ATP pocket.

Belongs to the RecF family.

It localises to the cytoplasm. Its function is as follows. The RecF protein is involved in DNA metabolism; it is required for DNA replication and normal SOS inducibility. RecF binds preferentially to single-stranded, linear DNA. It also seems to bind ATP. This chain is DNA replication and repair protein RecF, found in Pseudomonas fluorescens (strain SBW25).